The chain runs to 282 residues: MSSYANHQALAGLTLGKSTDYRDTYDASLLQGVPRSLNRDPLGLKADNLPFHGTDIWTLYELSWLNAKGLPQVAVGHVELEYTSVNLIESKSFKLYLNSFNQTRFNNWDEVRQTLERDLSTCAQGKVSVALYRLDELEGQPIGHFNGTCIDDQDITIDNYEFTTDYLENATSGEKVVEETLVSHLLKSNCLITHQPDWGSIQIQYRGRQIDREKLLRYLVSFRHHNEFHEQCVERIFNDLLRFCQPEKLSVYARYTRRGGLDINPWRSNSDFVPSTTRLVRQ.

A substrate-binding site is contributed by 88–90 (IES). 90-91 (SK) is a binding site for NADPH. C190 functions as the Thioimide intermediate in the catalytic mechanism. The active-site Proton donor is the D197. Position 229–230 (229–230 (HE)) interacts with substrate. Residue 258–259 (RG) coordinates NADPH.

This sequence belongs to the GTP cyclohydrolase I family. QueF type 2 subfamily. In terms of assembly, homodimer.

The protein localises to the cytoplasm. It catalyses the reaction 7-aminomethyl-7-carbaguanine + 2 NADP(+) = 7-cyano-7-deazaguanine + 2 NADPH + 3 H(+). It functions in the pathway tRNA modification; tRNA-queuosine biosynthesis. In terms of biological role, catalyzes the NADPH-dependent reduction of 7-cyano-7-deazaguanine (preQ0) to 7-aminomethyl-7-deazaguanine (preQ1). The chain is NADPH-dependent 7-cyano-7-deazaguanine reductase from Escherichia coli O45:K1 (strain S88 / ExPEC).